Reading from the N-terminus, the 84-residue chain is NADH-ubiquinone oxidoreductase chain 4L (84 aa).

Transmembrane regions (helical) follow at residues 18 to 38 (IISL…KIIY) and 51 to 71 (FALF…SLLV).

The protein belongs to the complex I subunit 4L family.

It is found in the mitochondrion membrane. It catalyses the reaction a ubiquinone + NADH + 5 H(+)(in) = a ubiquinol + NAD(+) + 4 H(+)(out). Functionally, core subunit of the mitochondrial membrane respiratory chain NADH dehydrogenase (Complex I) that is believed to belong to the minimal assembly required for catalysis. Complex I functions in the transfer of electrons from NADH to the respiratory chain. The immediate electron acceptor for the enzyme is believed to be ubiquinone. The polypeptide is NADH-ubiquinone oxidoreductase chain 4L (ND4L) (Debaryomyces hansenii (strain ATCC 36239 / CBS 767 / BCRC 21394 / JCM 1990 / NBRC 0083 / IGC 2968) (Yeast)).